The following is a 337-amino-acid chain: DNA-directed RNA polymerase subunit alpha (337 aa).

Residues 1-231 are alpha N-terminal domain (alpha-NTD); that stretch reads MRNITTSAYT…KQLSVFDKIT (231 aa). The segment at 248–337 is alpha C-terminal domain (alpha-CTD); it reads NTKLLQNITD…IAELKAQNEG (90 aa).

This sequence belongs to the RNA polymerase alpha chain family. Homodimer. The RNAP catalytic core consists of 2 alpha, 1 beta, 1 beta' and 1 omega subunit. When a sigma factor is associated with the core the holoenzyme is formed, which can initiate transcription.

It carries out the reaction RNA(n) + a ribonucleoside 5'-triphosphate = RNA(n+1) + diphosphate. Its function is as follows. DNA-dependent RNA polymerase catalyzes the transcription of DNA into RNA using the four ribonucleoside triphosphates as substrates. This Campylobacter jejuni subsp. jejuni serotype O:6 (strain 81116 / NCTC 11828) protein is DNA-directed RNA polymerase subunit alpha.